The following is a 219-amino-acid chain: U-scoloptoxin(11)-Sm7a (219 aa).

Residues 1-15 (MYLFLMINYFVLANS) form the signal peptide.

The protein belongs to the scoloptoxin-11 family. Post-translationally, contains 8 disulfide bonds. In terms of tissue distribution, expressed by the venom gland.

It is found in the secreted. This Scolopendra morsitans (Tanzanian blue ringleg centipede) protein is U-scoloptoxin(11)-Sm7a.